Reading from the N-terminus, the 365-residue chain is P43 5S RNA-binding protein (365 aa).

9 C2H2-type zinc fingers span residues 15–39 (LRCP…MAGH), 45–69 (WKCG…VKRH), 75–100 (LSCP…LYKH), 106–130 (LKCF…LSVH), 136–160 (SVCD…QKRH), 163–187 (YRCS…VKKH), 191–213 (LQCA…KATH), 220–245 (LPCP…RKLH), and 251–275 (HRCP…LVVH).

As to quaternary structure, the 42S RNP particle comprises four subunits each of which contains one molecule of 5S RNA, three molecules of tRNA, two molecules of p50 (EF1-alpha) and one molecule of the 5S RNA binding protein 43.

P43 is a 5S RNA binding protein which is a major constituent of oocytes and comprises part of a 42S ribonucleoprotein storage particle. The polypeptide is P43 5S RNA-binding protein (Xenopus laevis (African clawed frog)).